A 254-amino-acid chain; its full sequence is NH(3)-dependent NAD(+) synthetase (254 aa).

32-39 (GISGGVDS) serves as a coordination point for ATP. Residue Asp38 coordinates Mg(2+). Position 113 (Arg113) interacts with deamido-NAD(+). Thr133 contacts ATP. Glu138 is a Mg(2+) binding site. Deamido-NAD(+) contacts are provided by Lys146 and Asp153. Residues Lys162 and Ser184 each coordinate ATP. 244 to 245 (HK) contributes to the deamido-NAD(+) binding site.

It belongs to the NAD synthetase family. Homodimer.

It carries out the reaction deamido-NAD(+) + NH4(+) + ATP = AMP + diphosphate + NAD(+) + H(+). It participates in cofactor biosynthesis; NAD(+) biosynthesis; NAD(+) from deamido-NAD(+) (ammonia route): step 1/1. Its function is as follows. Catalyzes the ATP-dependent amidation of deamido-NAD to form NAD. Uses ammonia as a nitrogen source. The protein is NH(3)-dependent NAD(+) synthetase of Thermococcus sibiricus (strain DSM 12597 / MM 739).